We begin with the raw amino-acid sequence, 753 residues long: Inactive protein-tyrosine phosphatase egg-4 (753 aa).

Disordered regions lie at residues 26-46 (TSLQ…STDN) and 75-145 (SFRK…SGHG). The segment covering 35–46 (NTDDSSADSTDN) has biased composition (low complexity). Basic and acidic residues-rich tracts occupy residues 84-94 (AQKDRRSKERL) and 129-145 (VSEK…SGHG). The region spanning 408-661 (MERRFEILEN…IFVHRLVAFF (254 aa)) is the Tyrosine-protein phosphatase domain.

Belongs to the protein-tyrosine phosphatase family. In terms of assembly, part of a complex, consisting of pseudophosphatases egg-3, egg-4, egg-5 and kinase mbk-2; this complex is required for the oocyte-to-zygote transition. Interacts (via tyrosine-protein phosphatase domain) with kinase mbk-2 (via 'Tyr-619' and 'Tyr-621'); mbk-2 tyrosine phosphorylation enhances the interaction. The interaction inhibits mbk-2 kinase activity and is required for mbk-2 oocyte cortex localization. Interacts with egg-3.

The protein resides in the cytoplasm. Its subcellular location is the cell cortex. Inactive phosphatase which acts redundantly with egg-5 in the oocyte-to-zygote transition. Required for the polarization of cortical actin cytoskeleton rearrangement in the oocyte before and after fertilization. Together with egg-5, required for the cortical localization of kinase mbk-2 and for the inhibition of mbk-2 kinase activity in maturing oocyte until the end of meiosis I. Also required for kinase mbk-2, pseudophosphatase egg-3 and chitin synthase chs-1 localization to cytoplasmic foci after fertilization. This is Inactive protein-tyrosine phosphatase egg-4 from Caenorhabditis elegans.